A 100-amino-acid chain; its full sequence is NADH-quinone oxidoreductase subunit K (100 aa).

Transmembrane regions (helical) follow at residues 4–24, 29–49, and 61–81; these read TSYYVLLSAILFTIGVLGVLL, IVIFMSVELMLNAANLALVAF, and IVFFVITVAAAEVAVGLALLV.

The protein belongs to the complex I subunit 4L family. As to quaternary structure, NDH-1 is composed of 14 different subunits. Subunits NuoA, H, J, K, L, M, N constitute the membrane sector of the complex.

The protein localises to the cell membrane. The catalysed reaction is a quinone + NADH + 5 H(+)(in) = a quinol + NAD(+) + 4 H(+)(out). Functionally, NDH-1 shuttles electrons from NADH, via FMN and iron-sulfur (Fe-S) centers, to quinones in the respiratory chain. The immediate electron acceptor for the enzyme in this species is believed to be ubiquinone. Couples the redox reaction to proton translocation (for every two electrons transferred, four hydrogen ions are translocated across the cytoplasmic membrane), and thus conserves the redox energy in a proton gradient. The chain is NADH-quinone oxidoreductase subunit K from Chloroflexus aggregans (strain MD-66 / DSM 9485).